Reading from the N-terminus, the 427-residue chain is MRISKASNIESTGVSNCKNFNSKNCSKYSLMEVQNKNEKKRSLTSFHAKNITLIFGIIYVALLGVYICASQYKQAADYSFRESRVLAEGKSTSKKNAKTALRKTKQTTLTSADPEGQIMKAWAADPEYRKHLNVLYQILNNTDPNDELETSADPEGQIMKAYAADPEYRKHLNVLYQILNNTDPNDEVESSADPEGQIMKAYAADPEYRKHVNVLYQILNNTDPNDELETSADPEGQIMKAYAADPEYRKHVNVLYQILNHTDSSEVETSADPEGQIMKAYAADPEYRKHVNVLYQILNHTDSSEVETSADPEGQIMKAYAADPEYRKHVNVLYQILNNTDPNDELETSADPEGQIMKAYAADPEYRKHVNVLYQILNNTDPNDELETSADPEGQIMKAYAADPEYRKHVNVLYQILNNTDPNDESS.

GBP repeat units follow at residues 109–149 (LTSA…DELE), 150–189 (TSADPEGQIMKAYAADPEYRKHLNVLYQILNNTDPNDEVE), 190–229 (SSADPEGQIMKAYAADPEYRKHVNVLYQILNNTDPNDELE), 230–269 (TSADPEGQIMKAYAADPEYRKHVNVLYQILNHTDSSEVET), 270–307 (SADPEGQIMKAYAADPEYRKHVNVLYQILNHTDSSEVE), 308–347 (TSADPEGQIMKAYAADPEYRKHVNVLYQILNNTDPNDELE), 348–387 (TSADPEGQIMKAYAADPEYRKHVNVLYQILNNTDPNDELE), and 388–427 (TSADPEGQIMKAYAADPEYRKHVNVLYQILNNTDPNDESS).

The sequence is that of Glycophorin-binding protein-related antigen (GBPH) from Plasmodium falciparum (isolate FCBR / Columbia).